The following is an 821-amino-acid chain: DNA ligase (821 aa).

NAD(+)-binding positions include 50-54, 99-100, and E140; these read DAEYD and SL. K142 (N6-AMP-lysine intermediate) is an active-site residue. NAD(+) is bound by residues R163, E200, K319, and K343. Zn(2+)-binding residues include C452, C455, C470, and C476. One can recognise a BRCT domain in the interval 742 to 821; sequence AAALPLEGKT…AGLQALLAGN (80 aa).

The protein belongs to the NAD-dependent DNA ligase family. LigA subfamily. Mg(2+) serves as cofactor. The cofactor is Mn(2+).

The enzyme catalyses NAD(+) + (deoxyribonucleotide)n-3'-hydroxyl + 5'-phospho-(deoxyribonucleotide)m = (deoxyribonucleotide)n+m + AMP + beta-nicotinamide D-nucleotide.. DNA ligase that catalyzes the formation of phosphodiester linkages between 5'-phosphoryl and 3'-hydroxyl groups in double-stranded DNA using NAD as a coenzyme and as the energy source for the reaction. It is essential for DNA replication and repair of damaged DNA. This Chromobacterium violaceum (strain ATCC 12472 / DSM 30191 / JCM 1249 / CCUG 213 / NBRC 12614 / NCIMB 9131 / NCTC 9757 / MK) protein is DNA ligase.